Reading from the N-terminus, the 409-residue chain is Diels-Alderase ucsH (409 aa).

Residues 386 to 406 (IYFFICMLLAVVTFGYINILE) traverse the membrane as a helical segment.

This sequence belongs to the Diels-Alderase family.

It is found in the membrane. The protein operates within mycotoxin biosynthesis. In terms of biological role, diels-Alderase; part of the gene cluster that mediates the biosynthesis of UCS1025A, a member of the pyrrolizidinone family that acts as a strong telomerase inhibitor and displays potent antibacterial and antitumor properties. These compounds share a hemiaminal-containing pyrrolizidinone core fused with a gamma-lactone, giving a furopyrrolizidine that is connected to a decalin fragment. The polyketide synthase module (PKS) of the PKS-NRPS ucsA is responsible for the synthesis of the polyketide backbone via the condensation of an acetyl-CoA starter unit with 6 malonyl-CoA units. The downstream nonribosomal peptide synthetase (NRPS) module then amidates the carboxyl end of the polyketide with a 2S,3S-methylproline derived from L-isoleucine by the 2-oxoglutarate-dependent dioxygenase ucsF which converts L-isoleucine to (4S,5S)-4-methylpyrroline-5-carboxylate that is further converted to 2S,3S-methylproline by the pyrroline-5-carboxylate reductase ucsG. Reductive release of the completed aminoacyl polyketide from the assembly line can form the 3-pyrrolin-2-one structure via an intramolecular Knoevenagel reaction. Because ucsA lacks a designated enoylreductase (ER) domain, the required activity is provided the enoyl reductase ucsL. This keto acyclic precursor is the substrate of the Diels-Alderase ucsH, that catalyzes the Diels-Alder cycloaddition. Oxidation of the 3S-methyl group to a carboxylate by the cytochrome P450 monooxygenase ucsK allows an oxa-Michael cyclization that might involve the reductase/dehydrogenase ucsI and which furnishes the furopyrrolizidine. The oxidase ucsJ likely plays a critical role in stereoselective reduction of the C5-C6 double bond to afford the required R-configured carboxylate group. Further enolization and oxidation at C5 by an unidentified enzyme affords the last intermediate that can undergo oxa-Michael cyclization to yield UCS1025A. The polypeptide is Diels-Alderase ucsH (Acremonium sp).